Consider the following 609-residue polypeptide: MRVLYLHTERFSWEVKEPALDIRDEPVSGGASNALVVFTTVERGDVPEEGFLRQIARDIVEVAEKVKASSIVIYPYAHLSNELARPYAAREIVNKLYEVVKSEFRGEVYKAPFGYYKAFELKCLGHPLSELSRSFKPGDSRAEKKAEERRDLYIVITPSGEEHDPAKFNYDGYEDLKILVEKEVFKRELGGGSEPRYLEYMRKFGFEWEPMSDVGHMRYAPEATLMMELVEDYAYAVAKSLGIPVFKIRGTNMFKLSERAIESHARLFGERLYIVESDTDLILRYAACFQQFAMVKDWVISYRQLPFGMLEVADSYRLEQPGETVLLFRLRRFYMPDLHIFTKDLAEAMEVTFRLHEAIFREIGKLGRTYVSLYNVTEDFYKAHRQYLVELARREGKPILVRVLPGQKYYWVLNVEFHIIDELGRPREIATFQIDVGNAQRFGIKYVDENNQTRYPVIIHTAILGSVERYLYAVFDTLARAEKEGKAPRLPTWLSPVQVRIIPITRDNLKYAVEVADKFEAEGIRVDVDDRDETLSKRIRDAEVAWVPYICVVGSKEEAEGVVSVRERGGGQYRVKPEDLIKKIREDVRGYPNRPLYMPRFLSQRPTRS.

Positions M1–E143 are editing domain. 2 catalytic regions span residues P195–P491 and R196–P491. The Zn(2+) site is built by C288, H339, and H460.

This sequence belongs to the class-II aminoacyl-tRNA synthetase family. In terms of assembly, homodimer. The cofactor is Zn(2+).

It localises to the cytoplasm. It carries out the reaction tRNA(Thr) + L-threonine + ATP = L-threonyl-tRNA(Thr) + AMP + diphosphate + H(+). Its function is as follows. Catalyzes the attachment of threonine to tRNA(Thr) in a two-step reaction: L-threonine is first activated by ATP to form Thr-AMP and then transferred to the acceptor end of tRNA(Thr). Also edits incorrectly charged L-seryl-tRNA(Thr). The polypeptide is Threonine--tRNA ligase (Pyrobaculum neutrophilum (strain DSM 2338 / JCM 9278 / NBRC 100436 / V24Sta) (Thermoproteus neutrophilus)).